A 516-amino-acid chain; its full sequence is Probable fucosyltransferase 8 (516 aa).

The chain crosses the membrane as a helical; Signal-anchor for type II membrane protein span at residues 5–25 (ITVVTCLFLLSVMQLSFFNIF). Residues 26-516 (NYQLLDATTN…ITGLKLVDSN (491 aa)) lie on the Lumenal side of the membrane. N-linked (GlcNAc...) asparagine glycosylation is found at Asn-35, Asn-116, Asn-211, Asn-362, and Asn-463.

It belongs to the glycosyltransferase 37 family. In terms of tissue distribution, expressed in leaves and stems.

The protein localises to the golgi apparatus. The protein resides in the golgi stack membrane. The protein operates within protein modification; protein glycosylation. Functionally, may be involved in cell wall biosynthesis. May act as a fucosyltransferase. In Arabidopsis thaliana (Mouse-ear cress), this protein is Probable fucosyltransferase 8 (FUT8).